Reading from the N-terminus, the 2138-residue chain is Protein virilizer homolog (2138 aa).

Disordered stretches follow at residues 1503 to 1574 (RLPQ…SMHV), 1638 to 1664 (NPTPARDTEKVAGKPKQFKADPDDDLQ), 1855 to 1881 (PVIPHSSDSLSNQSSPFISHGTQSSGG), 2013 to 2035 (PMQPPQHVRPPIQISQPSEQGVS), and 2058 to 2094 (YYHPPQQQEISQVQQQQQHHAVQGQQGAGTSQQQESG). Positions 1528 to 1541 (ENSSVDIPTQNSIQ) are enriched in polar residues. 2 stretches are compositionally biased toward polar residues: residues 1862 to 1881 (DSLSNQSSPFISHGTQSSGG) and 2025 to 2035 (QISQPSEQGVS).

Belongs to the vir family. In terms of assembly, interacts with MTB, FIP37 and HAKAI. Associates with MTA, MTB, FIP37 and HAKAI to form the m6A writer complex which is essential for adenosine methylation at specific mRNA sequences.

It localises to the nucleus speckle. The protein resides in the nucleus. It is found in the nucleoplasm. Functionally, subunit of the N6-methyltransferase complex, a multiprotein complex that mediates N6-methyladenosine (m6A) methylation at the 5'-[AG]GAC-3' consensus sites of some mRNAs. Associates with MTA, MTB, FIP37 and HAKAI to form the m6A writer complex which is essential for adenosine methylation at specific mRNA sequences. N6-methyladenosine (m6A) plays a role in mRNA stability, processing, translation efficiency and editing. This chain is Protein virilizer homolog, found in Arabidopsis thaliana (Mouse-ear cress).